Consider the following 199-residue polypeptide: Ribonuclease P protein subunit p25 (199 aa).

A compositionally biased stretch (basic and acidic residues) spans methionine 1–glutamate 11. 2 disordered regions span residues methionine 1 to phenylalanine 28 and leucine 144 to alanine 199. Positions tyrosine 151–alanine 166 are enriched in pro residues. A phosphoserine mark is found at serine 172 and serine 182.

This sequence belongs to the histone-like Alba family. As to quaternary structure, component of nuclear RNase P and RNase MRP ribonucleoproteins. RNase P consists of a catalytic RNA moiety and 10 different protein chains; POP1, POP4, POP5, POP7, RPP14, RPP21, RPP25, RPP30, RPP38 and RPP40. Within the RNase P complex, POP1, POP7 and RPP25 form the 'finger' subcomplex, POP5, RPP14, RPP40 and homodimeric RPP30 form the 'palm' subcomplex, and RPP21, POP4 and RPP38 form the 'wrist' subcomplex. All subunits of the RNase P complex interact with the catalytic RNA. Several subunits of RNase P are also part of the RNase MRP complex. RNase MRP consists of a catalytic RNA moiety and about 8 protein subunits; POP1, POP7, RPP25, RPP30, RPP38, RPP40 and possibly also POP4 and POP5. POP7 forms a heterodimer with RPP25 that binds to the P3 stem loop of the catalytic RNA.

Its subcellular location is the nucleus. It localises to the nucleolus. Functionally, component of ribonuclease P, a ribonucleoprotein complex that generates mature tRNA molecules by cleaving their 5'-ends. Also a component of the MRP ribonuclease complex, which cleaves pre-rRNA sequences. The polypeptide is Ribonuclease P protein subunit p25 (RPP25) (Homo sapiens (Human)).